We begin with the raw amino-acid sequence, 1275 residues long: MKRIPRKTRGKSSGKGNDSTERADDGSAQLRDKQSSKVTQNVKEPGTTLKEQYKTRPSLQTVQKATENAELPMQTNDEGAVDKKGNTKGDKTNEHVEAEVNAADATKRQAKDTDKQKAQVTYNDTGINNANELSRSGNVDNEGGDNQKPMTTRIAEATSAIISKHPARVGLPPTASSGHGYQCHVCSAVLFSPLDLDAHVASHGLHGNMTLTSSEIQRHITEFISSWQNHPIVQVSADVENKKTAQLLHADTPRLVTWDAGLCTSFKIVPIVPAQVPQDVLAYTFFTSSYAIQSPFPEAAVSRIVVHTRWASNVDFDRDSSVIMAPPTENNIHLFKQLLNNETLSVRGANPLMFRANVLHMLLEFVLDNLYINKHTGFSQDHTPFTEGANLRSLPGPDAEKWYAIMYPTRMGTPNVSKICNFVASCVRNRVGRFDRAQMMNGAMSEWVDVFETSDALTVSIRGRWMARLARMNINPTEIEWALTECAHGYVTVTSPYAPSVNRLMPYRVSNAERQISQIIRIMNIGNNATVIQPVLQDISVLLQRISPLQIDPTIISNTMSTVSESTTQTLSPASSILGKLRPSNSDFSSFRVALAGWLYNGVVTTVIDDSSYPKDGGSVTSLENLWDFFILALALPLTTDPCAPVKAFMTLANMMVGFETIPMDNQIYTQSRRASAFSTPHTWPRCFMNIQLISPIDAPILRQWAEIIHRYWPNPSQIRFGAPNVFGSANLFTPPEVLLLPIDHQPANVTTPTLDFTNELTNWRARVCELMKNLVDNQRYQPGWTQSLVSSMRGTLDKLKLIKSMTPMYLQQLAPVELAVIAPMLPFPPFQVPYVRLDRDRVPTMVGVTRQSRDTITQPALSLSTTNTTVGVPLALDARAITVALLSGKYPSDLVTNVWYADAIYPMYADTEVFSNLQRDMITCEAVQTLITLVAQISETQYPVDRYLDWIPSLRASAATAATFAEWVNTSMKTAFDLSDMLLEPLLSGDPRMSQLAIQYQQYNGRTFNVIPEMPGSVVTDCVQLTAEVFNHEYNLFGIARGDIIIGRVQSTHLWSPLAPPPDLVFDRDTPGVHVFGRDCRISFGMNGAAPMIRDETGMMVPFEGNWIFPLALWQMNTRYFNQQFDAWIKTGELRIRIEMGAYPYMLHYYDPRQYANAWNLTSAWLEEISPTSIPSVPFMVPISSDHDISSAPAVQYIISTEYNDRSLFCTNSSSPQTIAGPDKHIPVERYNILTNPDAPPTQIQLPEVVDLYNVVTRYAYETPPITAVVMGVP.

Over residues 1 to 12 (MKRIPRKTRGKS) the composition is skewed to basic residues. Positions 1–147 (MKRIPRKTRG…NVDNEGGDNQ (147 aa)) are disordered. The segment covering 18 to 35 (DSTERADDGSAQLRDKQS) has biased composition (basic and acidic residues). Positions 55–66 (TRPSLQTVQKAT) are enriched in polar residues. Composition is skewed to basic and acidic residues over residues 80-98 (AVDK…HVEA) and 105-117 (ATKR…DKQK). Residues 118 to 139 (AQVTYNDTGINNANELSRSGNV) show a composition bias toward polar residues. The segment at 181-203 (YQCHVCSAVLFSPLDLDAHVASH) adopts a C2H2-type zinc-finger fold.

The protein belongs to the turreted BTV-fold inner capsid family. In terms of assembly, homodecamer; each decamer is made up of two conformers of VP2, called VP2A and VP2B. 12 homodecamers assemble to form an icosahedral capsid. Interacts with protein mu-NS; in viral inclusions. The cofactor is Mg(2+). Mn(2+) is required as a cofactor.

It is found in the virion. It catalyses the reaction ATP + H2O = ADP + phosphate + H(+). Functionally, inner capsid protein that self-assembles to form an icosahedral capsid with a T=2 symmetry, which consists of 120 copies of VP2, with channels at each of its five-fold vertices. This capsid constitutes the innermost concentric layer of the viral mature particle. Displays NTPase, RNA 5'-triphosphatase (RTPase) and RNA helicase activities and probably participates in transcription of the viral genome. Helicase activity might be involved in unwinding or reannealing dsRNA during RNA synthesis. RTPase enzymatic activity represents the first step in RNA capping, which yields a 5'-diphosphorylated plus-strand RNA. In Reovirus type 2 (strain D5/Jones) (T2J), this protein is Inner capsid protein lambda-1.